Consider the following 285-residue polypeptide: Pantothenate synthetase (285 aa).

30 to 37 lines the ATP pocket; it reads MGNLHDGH. His-37 (proton donor) is an active-site residue. Residue Gln-61 participates in (R)-pantoate binding. Residue Gln-61 participates in beta-alanine binding. Residue 148-151 coordinates ATP; sequence GEKD. A (R)-pantoate-binding site is contributed by Gln-154. Residue 185–188 participates in ATP binding; that stretch reads RSSR.

It belongs to the pantothenate synthetase family. Homodimer.

The protein localises to the cytoplasm. It carries out the reaction (R)-pantoate + beta-alanine + ATP = (R)-pantothenate + AMP + diphosphate + H(+). It functions in the pathway cofactor biosynthesis; (R)-pantothenate biosynthesis; (R)-pantothenate from (R)-pantoate and beta-alanine: step 1/1. Catalyzes the condensation of pantoate with beta-alanine in an ATP-dependent reaction via a pantoyl-adenylate intermediate. This is Pantothenate synthetase from Alcanivorax borkumensis (strain ATCC 700651 / DSM 11573 / NCIMB 13689 / SK2).